A 69-amino-acid polypeptide reads, in one-letter code: Large ribosomal subunit protein bL31 (69 aa).

Residues C17, C19, C37, and C40 each contribute to the Zn(2+) site.

This sequence belongs to the bacterial ribosomal protein bL31 family. Type A subfamily. In terms of assembly, part of the 50S ribosomal subunit. It depends on Zn(2+) as a cofactor.

In terms of biological role, binds the 23S rRNA. The chain is Large ribosomal subunit protein bL31 from Caldicellulosiruptor saccharolyticus (strain ATCC 43494 / DSM 8903 / Tp8T 6331).